A 94-amino-acid chain; its full sequence is ESAT-6-like protein EsxL (94 aa).

The protein belongs to the WXG100 family. ESAT-6 subfamily. As to quaternary structure, strongly interacts with EsxK to form a heterodimeric complex under reducing conditions.

It is found in the secreted. This Mycobacterium bovis (strain ATCC BAA-935 / AF2122/97) protein is ESAT-6-like protein EsxL.